The chain runs to 381 residues: Alkanesulfonate monooxygenase (381 aa).

The protein belongs to the SsuD family. Homotetramer.

It catalyses the reaction an alkanesulfonate + FMNH2 + O2 = an aldehyde + FMN + sulfite + H2O + 2 H(+). Catalyzes the desulfonation of aliphatic sulfonates. The sequence is that of Alkanesulfonate monooxygenase from Escherichia coli O157:H7.